The chain runs to 361 residues: Peptide chain release factor 1 (361 aa).

An N5-methylglutamine modification is found at Q235. Residues 286-305 (IDSARSAERKQKVGSGDRSE) are disordered.

It belongs to the prokaryotic/mitochondrial release factor family. In terms of processing, methylated by PrmC. Methylation increases the termination efficiency of RF1.

It is found in the cytoplasm. Functionally, peptide chain release factor 1 directs the termination of translation in response to the peptide chain termination codons UAG and UAA. This is Peptide chain release factor 1 from Rhodopseudomonas palustris (strain HaA2).